The chain runs to 542 residues: Major facilitator superfamily domain-containing protein 6-like (542 aa).

Helical transmembrane passes span Leu-46–Leu-66, Leu-89–Val-109, Met-198–Trp-218, Val-246–Ile-266, Phe-272–Tyr-292, Val-321–Met-341, Gly-352–Leu-372, Trp-381–Trp-401, Trp-404–Val-424, Phe-444–Val-464, and Val-469–Val-489.

The protein belongs to the major facilitator superfamily. MFSD6 family.

It is found in the membrane. This is Major facilitator superfamily domain-containing protein 6-like (mfsd6l) from Danio rerio (Zebrafish).